The sequence spans 469 residues: UTP--glucose-1-phosphate uridylyltransferase 2 (469 aa).

Alanine 2 bears the N-acetylalanine mark. Residues 85 to 88 (LNGG), lysine 99, glutamine 162, and glycine 191 each bind UTP. Position 87–88 (87–88 (GG)) interacts with substrate. Substrate is bound by residues histidine 192 and 220 to 222 (NSD). The UTP site is built by aspartate 222 and lysine 360.

The protein belongs to the UDPGP type 1 family. As to expression, expressed in cauline leaves, flowers and siliques.

It is found in the cytoplasm. The enzyme catalyses alpha-D-glucose 1-phosphate + UTP + H(+) = UDP-alpha-D-glucose + diphosphate. In terms of biological role, converts glucose 1-phosphate to UDP-glucose, which is the major glycosyl donor for polysaccharides. Acts redundantly with UGP1 and is essential for the synthesis of sucrose, starch and cell wall, and callose deposition. The sequence is that of UTP--glucose-1-phosphate uridylyltransferase 2 from Arabidopsis thaliana (Mouse-ear cress).